Reading from the N-terminus, the 1003-residue chain is Anoctamin-2 (1003 aa).

Residues 1–68 (MATPGPRDIP…PCGGESTRSS (68 aa)) are disordered. Residues 1–365 (MATPGPRDIP…FGEKIGLYFA (365 aa)) lie on the Cytoplasmic side of the membrane. Low complexity predominate over residues 10–21 (PLLPGSPRRLSP). Residues 366–386 (WLGLYTSFLIPSSVIGVIVFL) form a helical membrane-spanning segment. Residues 387 to 434 (YGCATIEEDIPSREMCDQQNAFTMCPLCDKSCDYWNLSSACGTAQASH) lie on the Extracellular side of the membrane. The N-linked (GlcNAc...) asparagine glycan is linked to Asn-422. A helical transmembrane segment spans residues 435-455 (LFDNPATVFFSIFMALWATMF). Residues 456–538 (LENWKRLQMR…KDRFPGYLMN (83 aa)) lie on the Cytoplasmic side of the membrane. A helical membrane pass occupies residues 539–559 (FASILFMIALTFSIVFGVIVY). The Extracellular portion of the chain corresponds to 560–582 (RITTAAALSLNKATRSNVRVTVT). The chain crosses the membrane as a helical span at residues 583–603 (ATAVIINLVVILILDEIYGAV). Residues 604–623 (AKWLTKIEVPKTEQTFEERL) are Cytoplasmic-facing. Residues 624–644 (ILKAFLLKFVNAYSPIFYVAF) form a helical membrane-spanning segment. The Extracellular segment spans residues 645–748 (FKGRFVGRPG…YTGLTPEYME (104 aa)). The helical transmembrane segment at 749-769 (MIIQFGFVTLFVASFPLAPVF) threads the bilayer. Topologically, residues 770–801 (ALLNNVIEVRLDAKKFVTELRRPDAVRTKDIG) are cytoplasmic. The helical transmembrane segment at 802–822 (IWFDILSGIGKFSVISNAFVI) threads the bilayer. At 823 to 907 (AITSDFIPRL…QYWFILSARL (85 aa)) the chain is on the extracellular side. 3 N-linked (GlcNAc...) asparagine glycosylation sites follow: Asn-841, Asn-849, and Asn-856. The helical transmembrane segment at 908-928 (AFVIIFQNLVMFLSVLVDWMI) threads the bilayer. Topologically, residues 929 to 1003 (PDIPTDISDQ…MSSGSQHTNV (75 aa)) are cytoplasmic. The tract at residues 961-1003 (MDEPALRSPGGGDRSRSRAASSAPSGQSQLGSMMSSGSQHTNV) is disordered. Low complexity predominate over residues 978–1003 (RAASSAPSGQSQLGSMMSSGSQHTNV). The DLG4 binding (PDZ) signature appears at 1001–1003 (TNV).

This sequence belongs to the anoctamin family. As to quaternary structure, homodimer. Component of a presynaptic protein complex recruited to specialized plasma membrane domains of photoreceptors. Interacts with DLG4 by its C-terminal region. Retina, especially in the photoreceptor synaptic terminals.

It localises to the cell membrane. The enzyme catalyses chloride(in) = chloride(out). With respect to regulation, channel activity is repressed by chloride inhibitors; strongly by niflumic acid (NFA), partially by flufenamic acid (FFA), and only slightly by meclofenamic acid (MFA), 5-Nitro-2-(3-phenylpropylamino)benzoic acid (NPPB), 4-acetamido-4'-isothiocyanato-stilben-2,2'-disulfonate (SITS), and 4,4'-diisothiocyanatostilbene-2,2'-disulfonic acid (DIDS). Functionally, calcium-activated chloride channel (CaCC) which may play a role in olfactory signal transduction. Odorant molecules bind to odor-sensing receptors (OSRs), leading to an increase in calcium entry that activates CaCC current which amplifies the depolarization of the OSR cells, ANO2 seems to be the underlying chloride channel involved in this process. May mediate light perception amplification in retina. The sequence is that of Anoctamin-2 (ANO2) from Homo sapiens (Human).